The primary structure comprises 520 residues: GMP synthase [glutamine-hydrolyzing] (520 aa).

The Glutamine amidotransferase type-1 domain occupies 8–202; it reads RLLIIDFGSQ…FVRLAGFTGD (195 aa). Catalysis depends on C86, which acts as the Nucleophile. Active-site residues include H177 and E179. Residues 203–395 form the GMPS ATP-PPase domain; sequence WTMDAYREQA…LGLPASFIGR (193 aa). 230–236 is a binding site for ATP; it reads SGGVDSS.

In terms of assembly, homodimer.

It carries out the reaction XMP + L-glutamine + ATP + H2O = GMP + L-glutamate + AMP + diphosphate + 2 H(+). It functions in the pathway purine metabolism; GMP biosynthesis; GMP from XMP (L-Gln route): step 1/1. Functionally, catalyzes the synthesis of GMP from XMP. The polypeptide is GMP synthase [glutamine-hydrolyzing] (Dinoroseobacter shibae (strain DSM 16493 / NCIMB 14021 / DFL 12)).